A 422-amino-acid polypeptide reads, in one-letter code: Histone deacetylase B (422 aa).

Residue Asp102 coordinates substrate. His144 (proton acceptor) is an active-site residue. Gly152 contacts substrate. 3 residues coordinate a divalent metal cation: Asp179, His181, and Asp268. Residue Tyr307 coordinates substrate. The interval 399–422 (IDFDRDEDSKENMDKRKKKHNDFS) is disordered. Residues 413–422 (KRKKKHNDFS) are compositionally biased toward basic residues.

Belongs to the histone deacetylase family. HD type 1 subfamily.

It localises to the nucleus. Its subcellular location is the cytoplasm. It catalyses the reaction N(6)-acetyl-L-lysyl-[histone] + H2O = L-lysyl-[histone] + acetate. With respect to regulation, its activity is inhibited by trichostatin A (TSA), a well known histone deacetylase inhibitor. Cytosolic activity is refractory to inhibition by TSA, while the nuclear activity is inhibited completely. Responsible for the deacetylation of lysine residues on the N-terminal part of the core histones (H2A, H2B, H3 and H4). Histone deacetylation plays an important role in transcriptional regulation, cell cycle progression and developmental events. Histone deacetylases act via the formation of large multiprotein complexes. May play a role in the regulation of the timing of gene expression during the development and in the definition aspects of the phenotype that mediate social behavior in genetically heterogeneous groups. This chain is Histone deacetylase B (hdaB), found in Dictyostelium discoideum (Social amoeba).